We begin with the raw amino-acid sequence, 194 residues long: HTH-type transcriptional regulator BetI (194 aa).

The region spanning E8–L68 is the HTH tetR-type domain. Positions T31–F50 form a DNA-binding region, H-T-H motif.

It participates in amine and polyamine biosynthesis; betaine biosynthesis via choline pathway [regulation]. Functionally, repressor involved in the biosynthesis of the osmoprotectant glycine betaine. It represses transcription of the choline transporter BetT and the genes of BetAB involved in the synthesis of glycine betaine. This chain is HTH-type transcriptional regulator BetI, found in Burkholderia cenocepacia (strain HI2424).